We begin with the raw amino-acid sequence, 373 residues long: Glutamine synthetase (373 aa).

N-acetylalanine is present on Ala2. The tract at residues Ala2–Lys25 is required for glutamine-induced ubiquitination by CRL4(CRBN) and proteasomal degradation. 2 positions are modified to N6-acetyllysine: Lys11 and Lys14. The 81-residue stretch at Val26–Arg106 folds into the GS beta-grasp domain. Tyr104 is subject to Phosphotyrosine. One can recognise a GS catalytic domain in the interval Leu113–Asn373. An ATP-binding site is contributed by Glu134. The Mn(2+) site is built by Glu134, Glu136, Glu196, and Glu203. Residue Glu203–Pro208 coordinates ATP. Asn246 to Trp247 is a binding site for L-glutamate. Position 253 (His253) interacts with Mn(2+). Residues Asn255–Ser257, Arg319, and Arg324 each bind ATP. L-glutamate is bound at residue Arg319. Tyr336–Glu338 contacts ADP. A Mn(2+)-binding site is contributed by Glu338. Arg340 provides a ligand contact to L-glutamate. Ser343 is subject to Phosphoserine.

This sequence belongs to the glutamine synthetase family. As to quaternary structure, decamer; composed of two pentamers. Interacts with PALMD. Interacts with RHOJ. Interacts with BEST2; this interaction tethers a fraction of GLUL to the membrane, causing a decrease of cytosolic glutamine synthase (GS) activity and inhibits the chloride channel activity of BEST2 by affecting the gating at the aperture in the absence of intracellular glutamate. Mg(2+) is required as a cofactor. Mn(2+) serves as cofactor. Palmitoylated; undergoes autopalmitoylation. In terms of processing, acetylated by EP300/p300; acetylation is stimulated by increased glutamine levels and promotes ubiquitin-mediated proteasomal degradation. Post-translationally, ubiquitinated by ZNRF1. Ubiquitinated by the DCX (DDB1-CUL4-X-box) E3 ubiquitin-protein ligase complex called CRL4(CRBN), leading to proteasomal degradation.

Its subcellular location is the cytoplasm. It is found in the cytosol. It localises to the microsome. The protein localises to the mitochondrion. The protein resides in the cell membrane. It carries out the reaction L-glutamate + NH4(+) + ATP = L-glutamine + ADP + phosphate + H(+). It catalyses the reaction L-cysteinyl-[protein] + hexadecanoyl-CoA = S-hexadecanoyl-L-cysteinyl-[protein] + CoA. Its activity is regulated as follows. Glutamine synthetase activity is inhibited by methionine sulfoximine (MSO). Its function is as follows. Glutamine synthetase that catalyzes the ATP-dependent conversion of glutamate and ammonia to glutamine. Its role depends on tissue localization: in the brain, it regulates the levels of toxic ammonia and converts neurotoxic glutamate to harmless glutamine, whereas in the liver, it is one of the enzymes responsible for the removal of ammonia. Plays a key role in ammonium detoxification during erythropoiesis: the glutamine synthetase activity is required to remove ammonium generated by porphobilinogen deaminase (HMBS) during heme biosynthesis to prevent ammonium accumulation and oxidative stress. Essential for proliferation of fetal skin fibroblasts. Independently of its glutamine synthetase activity, required for endothelial cell migration during vascular development. Involved in angiogenesis by regulating membrane localization and activation of the GTPase RHOJ, possibly by promoting RHOJ palmitoylation. May act as a palmitoyltransferase for RHOJ: able to autopalmitoylate and then transfer the palmitoyl group to RHOJ. Plays a role in ribosomal 40S subunit biogenesis. Through the interaction with BEST2, inhibits BEST2 channel activity by affecting the gating at the aperture in the absence of intracellular L-glutamate, but sensitizes BEST2 to intracellular L-glutamate, which promotes the opening of BEST2 and thus relieves its inhibitory effect on BEST2. The sequence is that of Glutamine synthetase from Bos taurus (Bovine).